A 962-amino-acid polypeptide reads, in one-letter code: Synphilin-1 (962 aa).

3 disordered regions span residues 80–99, 104–137, and 222–249; these read SPLKHQPETLENNENEDQKN, YQKGGETDQGPQPEELSPEDGVGGLPGKGSEPSQ, and TALRDQHKLSTEDSESSPALGKCGPAYE. ANK repeat units follow at residues 348–379, 383–412, 418–447, and 455–484; these read NGNNLLHIAASKGHAECLQHLTSLMGEDCLNE, EQLTPAGLAIKNGQLECVRWMVSETEAIAE, DFPSLIHYAGCYGQEKILLWLLQFMQEQGI, and EGNSAVHVASQHGYLGCIQTLVEYGANVTM. The stretch at 522–548 forms a coiled coil; it reads VKLTKQLKEQTVERVTLQSQLQQLLEA. Residues 548–590 are disordered; that stretch reads AQKSEGKSLPSSPSSPSSPASTKSQWKALDTDEESTGKSKVGA. Positions 554 to 571 are enriched in low complexity; that stretch reads KSLPSSPSSPSSPASTKS. An ANK 5 repeat occupies 602 to 631; that stretch reads VSSRARTKGKDEDSDKILRQLLGKEISENV. The segment covering 667-684 has biased composition (low complexity); sequence RQLMQRSLSESDTDSNNS. Positions 667-852 are disordered; it reads RQLMQRSLSE…QRTSESGEQM (186 aa). Residues 685–699 show a composition bias toward basic and acidic residues; it reads EDPKNTPVKRADRPR. The ANK 6 repeat unit spans residues 698–728; sequence PRPQPIVESVENVDSAESLHLMIKKHSLASG. Over residues 772–790 the composition is skewed to polar residues; that stretch reads PSTEATQSSPDSTAAQKVA. Over residues 831-840 the composition is skewed to basic and acidic residues; the sequence is NGEKDKDKGR.

In terms of assembly, associates with SNCA, RNF19A and PRKN. Ubiquitinated; mediated by SIAH1 or RNF19A and leading to its subsequent proteasomal degradation.

The polypeptide is Synphilin-1 (Sncaip) (Mus musculus (Mouse)).